Consider the following 189-residue polypeptide: Glucose-6-phosphate isomerase (189 aa).

H88, H90, E97, and H136 together coordinate Fe cation.

The protein belongs to the archaeal-type GPI family. Homodimer. The cofactor is Fe cation.

The protein resides in the cytoplasm. The enzyme catalyses alpha-D-glucose 6-phosphate = beta-D-fructose 6-phosphate. The protein operates within carbohydrate degradation; glycolysis; D-glyceraldehyde 3-phosphate and glycerone phosphate from D-glucose: step 2/4. The protein is Glucose-6-phosphate isomerase (pgiA) of Pyrococcus horikoshii (strain ATCC 700860 / DSM 12428 / JCM 9974 / NBRC 100139 / OT-3).